A 51-amino-acid polypeptide reads, in one-letter code: Otoconin-90 (51 aa).

The protein belongs to the phospholipase A2 family. Interacts with OTOL1.

It localises to the secreted. Major protein of the otoconia, a calcium carbonate structure in the saccule and utricle of the ear. Together with OTOL1, acts as a scaffold for otoconia biomineralization: sequesters calcium and forms interconnecting fibrils between otoconia that are incorporated into the calcium crystal structure. Together with OTOL1, modulates calcite crystal morphology and growth kinetics. It is unlikely that this protein has phospholipase A2 activity. This is Otoconin-90 (OC90) from Cavia porcellus (Guinea pig).